The chain runs to 418 residues: UPF0261 protein BRA1168/BS1330_II1159 (418 aa).

It belongs to the UPF0261 family.

This Brucella suis biovar 1 (strain 1330) protein is UPF0261 protein BRA1168/BS1330_II1159.